Consider the following 117-residue polypeptide: Large ribosomal subunit protein bL19 (117 aa).

This sequence belongs to the bacterial ribosomal protein bL19 family.

Its function is as follows. This protein is located at the 30S-50S ribosomal subunit interface and may play a role in the structure and function of the aminoacyl-tRNA binding site. The sequence is that of Large ribosomal subunit protein bL19 from Phocaeicola vulgatus (strain ATCC 8482 / DSM 1447 / JCM 5826 / CCUG 4940 / NBRC 14291 / NCTC 11154) (Bacteroides vulgatus).